We begin with the raw amino-acid sequence, 90 residues long: U7-theraphotoxin-Hhn1a 6 (90 aa).

Positions 1–19 (MKTAIFTVVLALAVFAVLS) are cleaved as a signal peptide. Positions 20 to 50 (FGWEANEKALSEEFTELIHEKEAASEAEARE) are excised as a propeptide. Disulfide bonds link Cys-51/Cys-65, Cys-58/Cys-70, and Cys-64/Cys-81.

It belongs to the neurotoxin 10 (Hwtx-1) family. 13 (Hntx-13) subfamily. As to expression, expressed by the venom gland.

Its subcellular location is the secreted. Functionally, ion channel inhibitor. In Cyriopagopus hainanus (Chinese bird spider), this protein is U7-theraphotoxin-Hhn1a 6.